We begin with the raw amino-acid sequence, 535 residues long: CTP synthase (535 aa).

Positions 1–267 are amidoligase domain; that stretch reads MTKYIFVTGG…DQIVCDHLKL (267 aa). Residue serine 13 participates in CTP binding. Serine 13 serves as a coordination point for UTP. 14–19 contacts ATP; that stretch reads SLGKGI. An L-glutamine-binding site is contributed by tyrosine 54. Aspartate 71 serves as a coordination point for ATP. Positions 71 and 141 each coordinate Mg(2+). CTP-binding positions include 148 to 150, 188 to 193, and lysine 224; these read DIE and KTKPTQ. Residues 188-193 and lysine 224 contribute to the UTP site; that span reads KTKPTQ. 240–242 serves as a coordination point for ATP; it reads RDA. Residues 292 to 534 enclose the Glutamine amidotransferase type-1 domain; the sequence is KIALVGKYVE…VKASITNKES (243 aa). Glycine 354 provides a ligand contact to L-glutamine. Catalysis depends on cysteine 381, which acts as the Nucleophile; for glutamine hydrolysis. L-glutamine contacts are provided by residues 382-385, glutamate 405, and arginine 462; that span reads LGMQ. Active-site residues include histidine 507 and glutamate 509.

This sequence belongs to the CTP synthase family. As to quaternary structure, homotetramer.

It carries out the reaction UTP + L-glutamine + ATP + H2O = CTP + L-glutamate + ADP + phosphate + 2 H(+). It catalyses the reaction L-glutamine + H2O = L-glutamate + NH4(+). The catalysed reaction is UTP + NH4(+) + ATP = CTP + ADP + phosphate + 2 H(+). The protein operates within pyrimidine metabolism; CTP biosynthesis via de novo pathway; CTP from UDP: step 2/2. With respect to regulation, allosterically activated by GTP, when glutamine is the substrate; GTP has no effect on the reaction when ammonia is the substrate. The allosteric effector GTP functions by stabilizing the protein conformation that binds the tetrahedral intermediate(s) formed during glutamine hydrolysis. Inhibited by the product CTP, via allosteric rather than competitive inhibition. Catalyzes the ATP-dependent amination of UTP to CTP with either L-glutamine or ammonia as the source of nitrogen. Regulates intracellular CTP levels through interactions with the four ribonucleotide triphosphates. The sequence is that of CTP synthase from Bacillus thuringiensis subsp. konkukian (strain 97-27).